We begin with the raw amino-acid sequence, 312 residues long: Ribosomal protein L11 methyltransferase (312 aa).

S-adenosyl-L-methionine-binding residues include Thr-162, Gly-183, Asp-205, and Asn-248.

Belongs to the methyltransferase superfamily. PrmA family.

The protein localises to the cytoplasm. It catalyses the reaction L-lysyl-[protein] + 3 S-adenosyl-L-methionine = N(6),N(6),N(6)-trimethyl-L-lysyl-[protein] + 3 S-adenosyl-L-homocysteine + 3 H(+). Functionally, methylates ribosomal protein L11. The polypeptide is Ribosomal protein L11 methyltransferase (Exiguobacterium sp. (strain ATCC BAA-1283 / AT1b)).